We begin with the raw amino-acid sequence, 158 residues long: Large ribosomal subunit protein uL16 (158 aa).

Positions 1–22 (MLSPKRTKYRKQQRGRMKGKAT) are disordered.

It belongs to the universal ribosomal protein uL16 family. As to quaternary structure, part of the 50S ribosomal subunit.

Its function is as follows. Binds 23S rRNA and is also seen to make contacts with the A and possibly P site tRNAs. The polypeptide is Large ribosomal subunit protein uL16 (Synechococcus sp. (strain JA-3-3Ab) (Cyanobacteria bacterium Yellowstone A-Prime)).